Consider the following 620-residue polypeptide: EF-hand calcium-binding domain-containing protein 7 (620 aa).

The tract at residues 1 to 24 (MANHSSLPSQKYAASERQEYQKPQ) is disordered. 2 consecutive EF-hand domains span residues 98–133 (ATKN…KGEK) and 134–169 (MSQE…TCEQ). The disordered stretch occupies residues 176–234 (ERMDSNSKAKRQQFGSYIEKSPERSSSPKSSHGNLKLFDSETSTRKENKSSRPSSARSY). Over residues 213-225 (FDSETSTRKENKS) the composition is skewed to basic and acidic residues. Residues 394–429 (EFKSALSDMFDIIDLDGNGLLSLAEYNFFEMRTSGE) enclose the EF-hand 3 domain. The Ca(2+) site is built by Asp-407, Asp-409, Asn-411, and Glu-418.

It is found in the cell projection. Its subcellular location is the cilium membrane. Plays a role in the ciliary Hedgehog (Hh) signaling. In Xenopus laevis (African clawed frog), this protein is EF-hand calcium-binding domain-containing protein 7 (efcab7).